Consider the following 117-residue polypeptide: Ig heavy chain V region 102 (117 aa).

The signal sequence occupies residues 1-19 (MGWSCIILFLVATATGVHS). The segment at 20–49 (HVQLQQPGAELVKPGASVKVSCKASGYTFT) is framework-1. Cys-41 and Cys-115 are disulfide-bonded. Residues 50-54 (SYWMH) form a complementarity-determining-1 region. Residues 55-68 (WVKQRPGQGLEWIG) form a framework-2 region. The interval 69–85 (RIHPSDSDTNYNQKFKG) is complementarity-determining-2. The tract at residues 86–117 (KATLTVDKSSSTAYMQLSSLTSEDSAVYYCAI) is framework-3.

The polypeptide is Ig heavy chain V region 102 (Mus musculus (Mouse)).